Reading from the N-terminus, the 394-residue chain is Ceramide synthase 4 (394 aa).

Topologically, residues 1-31 (MLSSFNEWFWQDRFWLPPNVTWTELEDRDGR) are lumenal. N19 carries an N-linked (GlcNAc...) asparagine glycan. Residues 32–52 (VYPHPQDLLAALPLALVLLAM) form a helical membrane-spanning segment. A homeobox-like region spans residues 67–128 (WLGVRDQTRR…RRRRNQDRPQ (62 aa)). Residues 131–332 (KKFCEASWRF…ILRMLYSFMK (202 aa)) enclose the TLC domain. 4 helical membrane-spanning segments follow: residues 140–160 (FLFY…ESWL), 179–199 (LYWW…RLPF), 209–229 (QVIH…ANLL), and 260–280 (VCDA…LVLF). The Last loop motif motif lies at 291 to 301 (ESISNRGPFFG). Residues 304–324 (FFNGLLMLLQLLHVFWSCLIL) traverse the membrane as a helical segment. Topologically, residues 325–394 (RMLYSFMKKG…RLTNRHTTAT (70 aa)) are cytoplasmic. A disordered region spans residues 341–394 (RSDVEESDSSEEAAAAQEPLQLKNGAAGGPRPAPTDGPRSRVAGRLTNRHTTAT). 3 positions are modified to phosphoserine: S342, S349, and S350.

Post-translationally, phosphorylated at the C-terminus by CK2. In terms of processing, N-glycosylated.

Its subcellular location is the endoplasmic reticulum membrane. The enzyme catalyses sphinganine + octadecanoyl-CoA = N-(octadecanoyl)-sphinganine + CoA + H(+). The catalysed reaction is eicosanoyl-CoA + sphinganine = N-eicosanoylsphinganine + CoA + H(+). It catalyses the reaction docosanoyl-CoA + sphinganine = N-docosanoylsphinganine + CoA + H(+). It carries out the reaction tetracosanoyl-CoA + sphinganine = N-tetracosanoylsphinganine + CoA + H(+). The enzyme catalyses hexacosanoyl-CoA + sphinganine = N-hexacosanoylsphinganine + CoA + H(+). The catalysed reaction is a fatty acyl-CoA + sphing-4-enine = an N-acylsphing-4-enine + CoA + H(+). It catalyses the reaction sphing-4-enine + octadecanoyl-CoA = N-octadecanoylsphing-4-enine + CoA + H(+). It carries out the reaction hexadecasphinganine + octadecanoyl-CoA = N-octadecanoylhexadecasphinganine + CoA + H(+). It functions in the pathway lipid metabolism; sphingolipid metabolism. Ceramide synthase that catalyzes formation of ceramide from sphinganine and acyl-CoA substrates, with high selectivity toward long and very-long chains (C18:0-C22:0) as acyl donor. The protein is Ceramide synthase 4 of Homo sapiens (Human).